We begin with the raw amino-acid sequence, 481 residues long: Proline--tRNA ligase (481 aa).

Belongs to the class-II aminoacyl-tRNA synthetase family. ProS type 3 subfamily. As to quaternary structure, homodimer.

It localises to the cytoplasm. It carries out the reaction tRNA(Pro) + L-proline + ATP = L-prolyl-tRNA(Pro) + AMP + diphosphate. Its function is as follows. Catalyzes the attachment of proline to tRNA(Pro) in a two-step reaction: proline is first activated by ATP to form Pro-AMP and then transferred to the acceptor end of tRNA(Pro). In Chlorobium luteolum (strain DSM 273 / BCRC 81028 / 2530) (Pelodictyon luteolum), this protein is Proline--tRNA ligase.